The following is a 527-amino-acid chain: PTS system maltose-specific EIICB component (527 aa).

The 418-residue stretch at 1-418 (MMQKIQRFGS…FNIATPGREK (418 aa)) folds into the PTS EIIC type-1 domain. 12 helical membrane-spanning segments follow: residues 8 to 28 (FGSA…IVGI), 59 to 79 (GWTV…VALA), 93 to 113 (VYLT…GAFG), 132 to 152 (IKTL…VVFL), 173 to 193 (YIVM…SYIW), 200 to 220 (IGSL…IYTF), 224 to 244 (ILIP…GPAV), 276 to 296 (FALH…AFYV), 305 to 325 (LVAG…ITEP), 326 to 346 (IEFT…VLAA), 357 to 377 (VVGN…IPLF), and 382 to 402 (MTYV…FFVF). A PTS EIIB type-1 domain is found at 449–527 (DDTAFLYIEA…RERVEKILNQ (79 aa)). Residue cysteine 471 is the Phosphocysteine intermediate; for EIIB activity of the active site.

The protein resides in the cell membrane. The enzyme catalyses D-maltose(out) + N(pros)-phospho-L-histidyl-[protein] = alpha-maltose 6'-phosphate(in) + L-histidyl-[protein]. Functionally, the phosphoenolpyruvate-dependent sugar phosphotransferase system (sugar PTS), a major carbohydrate active transport system, catalyzes the phosphorylation of incoming sugar substrates concomitantly with their translocation across the cell membrane. This system is involved in maltose transport. The chain is PTS system maltose-specific EIICB component from Bacillus subtilis (strain 168).